The chain runs to 906 residues: Interference hedgehog (906 aa).

An N-terminal signal peptide occupies residues 1 to 20 (MSPLTSSLLLFSLLTSSLEA). Residues 21–715 (IPVLQPSFPP…SHNETVSMSP (695 aa)) lie on the Extracellular side of the membrane. Ig-like C2-type domains lie at 39–144 (PGVR…TARL), 134–236 (PLVV…ISSS), 252–341 (PHLL…INVT), and 346–433 (PRIT…LQVN). Cysteine 62 and cysteine 128 are disulfide-bonded. 4 N-linked (GlcNAc...) asparagine glycosylation sites follow: asparagine 85, asparagine 104, asparagine 148, and asparagine 209. Disulfide bonds link cysteine 173-cysteine 220 and cysteine 276-cysteine 324. Asparagine 339 and asparagine 388 each carry an N-linked (GlcNAc...) asparagine glycan. The cysteines at positions 367 and 415 are disulfide-linked. Polar residues predominate over residues 427 to 439 (GTLLQVNPKQIQS). Residues 427–476 (GTLLQVNPKQIQSEPRETGSGGGFGSHRSMKPVNHGQKPTKMIPPSPPNV) are disordered. 2 consecutive Fibronectin type-III domains span residues 470-578 (PPSP…LQPG) and 586-681 (VPEL…TQRP). N-linked (GlcNAc...) asparagine glycosylation is present at asparagine 475. Residues arginine 506, lysine 512, lysine 514, and arginine 552 each coordinate heparin. Asparagine 568 carries an N-linked (GlcNAc...) asparagine glycan. The tract at residues 673–713 (LKQGRTQRPRASTTEEPTIQGIGDRDTTSHNQPSHNETVSM) is disordered. Polar residues-rich tracts occupy residues 676–689 (GRTQ…TEEP) and 701–713 (SHNQ…TVSM). The chain crosses the membrane as a helical span at residues 716–736 (MLTGTIGGGALLLILLVSAFL). The Cytoplasmic segment spans residues 737–906 (CMCRRRSPRG…SSGSLNSVGV (170 aa)). Residues 789–906 (AQQQQQQLDE…SSGSLNSVGV (118 aa)) form a disordered region. Composition is skewed to low complexity over residues 854 to 866 (GNNN…SEAG) and 890 to 906 (SSRS…SVGV).

Belongs to the immunoglobulin superfamily. IHOG family. Homodimer. Heterotetramer; 2 iHog chains bind 2 hh chains when facilitated by heparin, heparin is required to promote high-affinity interactions between hh and iHog.

Its subcellular location is the membrane. Mediates response to the active Hedgehog (Hh) protein signal in embryos, functioning upstream or at the level of patched (ptc). This chain is Interference hedgehog, found in Drosophila persimilis (Fruit fly).